The primary structure comprises 120 residues: Large ribosomal subunit protein eL34 (120 aa).

The protein belongs to the eukaryotic ribosomal protein eL34 family.

The polypeptide is Large ribosomal subunit protein eL34 (RPL34) (Nicotiana tabacum (Common tobacco)).